The sequence spans 818 residues: Adhesion G protein-coupled receptor E5 (818 aa).

A signal peptide spans 1-23 (MRGVRCPGLLVVCILLSLSGAGT). Residues 24-533 (QKAESKNCAK…VQDPRLELIT (510 aa)) are Extracellular-facing. The region spanning 27–68 (ESKNCAKWCPINSKCVSNRSCVCKPGFSSEKELITNPAESCE) is the EGF-like 1 domain. 12 cysteine pairs are disulfide-bonded: Cys-31–Cys-41, Cys-35–Cys-47, Cys-49–Cys-67, Cys-73–Cys-86, Cys-80–Cys-95, Cys-97–Cys-118, Cys-169–Cys-182, Cys-176–Cys-191, Cys-193–Cys-212, Cys-218–Cys-231, Cys-225–Cys-240, and Cys-242–Cys-260. Asn-44 carries an N-linked (GlcNAc...) asparagine glycan. An EGF-like 2; calcium-binding domain is found at 69–119 (DINECLLPGFSCGDFAMCKNSEGSYTCVCNLGYKLLSGAESFVNESENTCQ). An N-linked (GlcNAc...) asparagine glycan is attached at Asn-112. Positions 165–213 (DVNECISGQNHCHQSTHCINKLGGYSCICRQGWKPVPGSPNGPVSTVCE) constitute an EGF-like 3; calcium-binding domain. An EGF-like 4; calcium-binding domain is found at 214 to 261 (DVDECSSGQHQCHNSTVCKNTVGSYKCHCRPGWKPTSGSLRGPDTICQ). A glycan (N-linked (GlcNAc...) asparagine) is linked at Asn-227. N-linked (GlcNAc...) asparagine glycosylation is found at Asn-299 and Asn-395. A GAIN-B domain is found at 347–525 (PFTYTSPSNT…AILMAQYHVQ (179 aa)). The residue at position 425 (Ser-425) is a Phosphoserine. 2 N-linked (GlcNAc...) asparagine glycosylation sites follow: Asn-461 and Asn-502. Disulfide bonds link Cys-482-Cys-507 and Cys-499-Cys-509. A GPS region spans residues 482–525 (CAFWKAHNGNGYWDTDGCSMNGTGFCHCNHLTSFAILMAQYHVQ). The chain crosses the membrane as a helical span at residues 534–554 (KVGLLLSLICLLLCILTFLLV). At 555 to 562 (KPIQSSRT) the chain is on the cytoplasmic side. Residues 563 to 583 (MVHLHLCICLFLGSIIFLVGV) form a helical membrane-spanning segment. Topologically, residues 584 to 602 (ENEGGEVGLRCRLVAMMLH) are extracellular. A helical membrane pass occupies residues 603–623 (FCFLAAFCWMALEGVELYFLV). Over 624-637 (VRVFQGQGLSTWQR) the chain is Cytoplasmic. Residues 638–658 (CLIGYGVPLLIVAISMAVVKM) traverse the membrane as a helical segment. Residues 659–679 (DGYGHATYCWLDFRKQGFLWS) lie on the Extracellular side of the membrane. Residues 680 to 700 (FSGPVAFIIFCNAAIFVITVW) traverse the membrane as a helical segment. Residues 701–723 (KLTKKFSEINPNMKKLRKARVLT) lie on the Cytoplasmic side of the membrane. Residues 724–744 (ITAIAQLLVLGCTWGFGLFLF) traverse the membrane as a helical segment. Over 745 to 752 (NPHSTWLS) the chain is Extracellular. The helical transmembrane segment at 753-773 (YIFTLLNCLQGLFLYVMLCLL) threads the bilayer. Residues 774–818 (NKKVREEYWKWACMVTGSKYTEFNSSTTGTGTSQTRALRSSESGM) are Cytoplasmic-facing. A Phosphoserine modification is found at Ser-798. Residues 799–808 (STTGTGTSQT) show a composition bias toward low complexity. A disordered region spans residues 799–818 (STTGTGTSQTRALRSSESGM). The residue at position 808 (Thr-808) is a Phosphothreonine. Positions 809–818 (RALRSSESGM) are enriched in polar residues. Residues Ser-814 and Ser-816 each carry the phosphoserine modification.

This sequence belongs to the G-protein coupled receptor 2 family. LN-TM7 subfamily. In terms of assembly, forms a heterodimer, consisting of a large extracellular region (alpha subunit) non-covalently linked to a seven-transmembrane moiety (beta subunit). Interacts with complement decay-accelerating factor (DAF). The largest isoform (isoform 1) do not interact with DAF. Also interacts with chondroitin sulfate. In terms of processing, proteolytically cleaved into 2 subunits, an extracellular alpha subunit and a seven-transmembrane subunit. In terms of tissue distribution, although predominantly expressed by cells of the immune system, expressed ubiquitously with particularly high levels of expression in the lung and the thymus gland. In the spleen, expression is detected on most myeloid cells and variable portions of T-cells, B-cells and NK cells. In the bone marrow, expressed in nearly all myeloid cells, whereas little if any expression is found on erythroid cells.

Its subcellular location is the cell membrane. It is found in the secreted. The protein localises to the extracellular space. In terms of biological role, receptor potentially involved in both adhesion and signaling processes early after leukocyte activation. Plays an essential role in leukocyte migration. The sequence is that of Adhesion G protein-coupled receptor E5 from Mus musculus (Mouse).